The primary structure comprises 221 residues: MKKAVVLLSGGMDSAAVIAMAQEQGFAVHALSVRYGQRHTSELDAAARVAKAQGVIAHKTVDVDLRSIGGSALTDDIDVPEAGGAGIPVTYVPARNTIMLSLALGWAEVLGANDIFCGVNAVDYSGYPDCRPEFVAAFQALANLATKSGVEGAGIKVHAPLQFLSKGQIVSEGVRLGVDFGLTVSCYNADANGAACSHCDACRLRAQGFTEAGVADPTLYA.

Residue 8–18 coordinates ATP; that stretch reads LSGGMDSAAVI. Zn(2+) is bound by residues Cys-186, Cys-196, Cys-199, and Cys-202.

Belongs to the QueC family. Zn(2+) serves as cofactor.

The catalysed reaction is 7-carboxy-7-deazaguanine + NH4(+) + ATP = 7-cyano-7-deazaguanine + ADP + phosphate + H2O + H(+). The protein operates within purine metabolism; 7-cyano-7-deazaguanine biosynthesis. Functionally, catalyzes the ATP-dependent conversion of 7-carboxy-7-deazaguanine (CDG) to 7-cyano-7-deazaguanine (preQ(0)). In Stenotrophomonas maltophilia (strain R551-3), this protein is 7-cyano-7-deazaguanine synthase.